Reading from the N-terminus, the 262-residue chain is 27 kDa lipoprotein antigen (262 aa).

The signal sequence occupies residues 1–28 (MSASCAVPRLTRFAVFAVAGATALSLSA). Composition is skewed to low complexity over residues 28 to 57 (ACGS…PSST) and 148 to 158 (STPGGASSTPP). 2 disordered regions span residues 28-60 (ACGS…TPNA) and 138-171 (VNGT…KPAW). Residue C29 is the site of N-palmitoyl cysteine attachment. The S-diacylglycerol cysteine moiety is linked to residue C29.

The protein resides in the cell membrane. In Mycobacterium intracellulare, this protein is 27 kDa lipoprotein antigen (Mi43).